The following is a 531-amino-acid chain: Probable inactive beta-glucosidase 25 (531 aa).

Residues 1–24 form the signal peptide; it reads MALKAILFLGLFLVVIVSPITVYG. Residues glutamine 53 and 202–203 each bind a beta-D-glucoside; that span reads NE. Residue glutamate 203 is the Proton donor of the active site. Cysteine 222 and cysteine 230 are disulfide-bonded. A beta-D-glucoside-binding positions include phenylalanine 348 and 477–478; that span reads EW.

Belongs to the glycosyl hydrolase 1 family.

This is Probable inactive beta-glucosidase 25 from Arabidopsis thaliana (Mouse-ear cress).